The sequence spans 308 residues: D-alanine--D-alanine ligase (308 aa).

Residues 104–301 (KQIWQGSDLP…FDELCVAILE (198 aa)) enclose the ATP-grasp domain. 130–185 (IAELGLPVIIKPVHEGSSVGMSKVEKAEDFAAAIEKATQHDAVVMAEKWITGREFT) provides a ligand contact to ATP. Positions 255, 268, and 270 each coordinate Mg(2+).

It belongs to the D-alanine--D-alanine ligase family. It depends on Mg(2+) as a cofactor. Mn(2+) serves as cofactor.

The protein resides in the cytoplasm. It carries out the reaction 2 D-alanine + ATP = D-alanyl-D-alanine + ADP + phosphate + H(+). It functions in the pathway cell wall biogenesis; peptidoglycan biosynthesis. Its function is as follows. Cell wall formation. This Acinetobacter baumannii (strain SDF) protein is D-alanine--D-alanine ligase.